The chain runs to 339 residues: Dihydroorotate dehydrogenase (quinone) (339 aa).

Residues 62–66 and Thr-86 each bind FMN; that span reads AGMDK. Lys-66 is a binding site for substrate. 111–115 is a substrate binding site; sequence NRMGF. FMN-binding residues include Asn-139 and Asn-172. Residue Asn-172 participates in substrate binding. The active-site Nucleophile is Ser-175. Asn-177 provides a ligand contact to substrate. FMN-binding residues include Lys-217 and Thr-245. Substrate is bound at residue 246 to 247; the sequence is NT. Residues Gly-268, Gly-297, and 318–319 contribute to the FMN site; that span reads FS.

Belongs to the dihydroorotate dehydrogenase family. Type 2 subfamily. As to quaternary structure, monomer. It depends on FMN as a cofactor.

It localises to the cell membrane. The catalysed reaction is (S)-dihydroorotate + a quinone = orotate + a quinol. The protein operates within pyrimidine metabolism; UMP biosynthesis via de novo pathway; orotate from (S)-dihydroorotate (quinone route): step 1/1. In terms of biological role, catalyzes the conversion of dihydroorotate to orotate with quinone as electron acceptor. The protein is Dihydroorotate dehydrogenase (quinone) of Shewanella halifaxensis (strain HAW-EB4).